A 166-amino-acid chain; its full sequence is Large ribosomal subunit protein uL10 (166 aa).

This sequence belongs to the universal ribosomal protein uL10 family. Part of the ribosomal stalk of the 50S ribosomal subunit. The N-terminus interacts with L11 and the large rRNA to form the base of the stalk. The C-terminus forms an elongated spine to which L12 dimers bind in a sequential fashion forming a multimeric L10(L12)X complex.

Functionally, forms part of the ribosomal stalk, playing a central role in the interaction of the ribosome with GTP-bound translation factors. The chain is Large ribosomal subunit protein uL10 from Streptococcus pneumoniae (strain 70585).